Here is a 454-residue protein sequence, read N- to C-terminus: Protein pid-2 (454 aa).

Residues 31 to 61 (VQNNQKEHPPVQEIKTVSSKSKEHRVSSSRK) are disordered. The segment covering 50-61 (KSKEHRVSSSRK) has biased composition (basic and acidic residues).

In terms of assembly, may interact with pid-4, pid-5, app-1 and prmt-5. Expressed throughout the mitotic and meiotic regions of the germline and in oocytes.

The protein resides in the cytoplasm. Its subcellular location is the perinuclear region. It is found in the cytoplasmic granule. Involved in gene silencing mediated by a class of 21 nucleotide PIWI-interacting RNAs (piRNAs) that possess a uracil residue at the 5'-end (also called 21U-RNAs) and that guide the Piwi protein prg-1 to its DNA targets for silencing. Not required for the biogenesis of 21U-RNAs. May also be involved in gene silencing mediated by 22G-siRNAs (a class of 22 nucleotide endogenous small interfering RNAs (siRNAs) that possess a triphosphorylated guanine residue at the 5'-end) and 26G-siRNAs (a class of 26 nucleotide siRNAs that possess a guanine residue at the 5'-end). Required for the biogenesis of secondary and tertiary 22G-siRNAs from many loci. Specifically, promotes the production of 22G-siRNAs from the 5' end of target mRNAs. May play a role in the production of 26G-siRNAs. Plays a role in small RNA-directed transgenerational epigenetic inheritance (also called RNAe) over several generations and germline immortality. Together with the argonaut protein hrde-1, promotes the silencing of the DNA transposable element Tc1. Required for the formation of liquid-like condensates in the cytoplasm called Z granules, playing a role in maintaining their assembly, viscosity and morphology in adult germ cells, and localization in early embryos. The protein is Protein pid-2 of Caenorhabditis elegans.